Consider the following 342-residue polypeptide: Pre-mRNA-splicing factor 18 (342 aa).

N-acetylmethionine is present on M1.

Belongs to the PRP18 family. As to quaternary structure, heterodimer with PPIH. Interacts with PRPF4 and with the spliceosome. Part of a complex containing U4/U6 snRNPs.

The protein localises to the nucleus speckle. Functionally, participates in the second step of pre-mRNA splicing. The polypeptide is Pre-mRNA-splicing factor 18 (Prpf18) (Mus musculus (Mouse)).